A 462-amino-acid chain; its full sequence is Bifunctional protein GlmU (462 aa).

Residues 1–235 (MSYINFSAII…TFEIMGVNSK (235 aa)) are pyrophosphorylase. UDP-N-acetyl-alpha-D-glucosamine contacts are provided by residues 11–14 (LAAG), lysine 25, glutamine 80, 85–86 (GT), 107–109 (YGD), glycine 144, glutamate 159, and asparagine 233. Aspartate 109 contacts Mg(2+). Position 233 (asparagine 233) interacts with Mg(2+). A linker region spans residues 236-256 (SDFVDLDKQYQQRKVQCLLSS). The interval 257-462 (GLMIIDPNRF…LNWKRLKNKK (206 aa)) is N-acetyltransferase. Residues arginine 339 and lysine 357 each contribute to the UDP-N-acetyl-alpha-D-glucosamine site. Residue histidine 369 is the Proton acceptor of the active site. Positions 372 and 383 each coordinate UDP-N-acetyl-alpha-D-glucosamine. Acetyl-CoA-binding positions include alanine 386, 392 to 393 (NY), alanine 429, and arginine 446.

This sequence in the N-terminal section; belongs to the N-acetylglucosamine-1-phosphate uridyltransferase family. In the C-terminal section; belongs to the transferase hexapeptide repeat family. As to quaternary structure, homotrimer. The cofactor is Mg(2+).

The protein localises to the cytoplasm. The catalysed reaction is alpha-D-glucosamine 1-phosphate + acetyl-CoA = N-acetyl-alpha-D-glucosamine 1-phosphate + CoA + H(+). The enzyme catalyses N-acetyl-alpha-D-glucosamine 1-phosphate + UTP + H(+) = UDP-N-acetyl-alpha-D-glucosamine + diphosphate. It participates in nucleotide-sugar biosynthesis; UDP-N-acetyl-alpha-D-glucosamine biosynthesis; N-acetyl-alpha-D-glucosamine 1-phosphate from alpha-D-glucosamine 6-phosphate (route II): step 2/2. Its pathway is nucleotide-sugar biosynthesis; UDP-N-acetyl-alpha-D-glucosamine biosynthesis; UDP-N-acetyl-alpha-D-glucosamine from N-acetyl-alpha-D-glucosamine 1-phosphate: step 1/1. The protein operates within bacterial outer membrane biogenesis; LPS lipid A biosynthesis. Catalyzes the last two sequential reactions in the de novo biosynthetic pathway for UDP-N-acetylglucosamine (UDP-GlcNAc). The C-terminal domain catalyzes the transfer of acetyl group from acetyl coenzyme A to glucosamine-1-phosphate (GlcN-1-P) to produce N-acetylglucosamine-1-phosphate (GlcNAc-1-P), which is converted into UDP-GlcNAc by the transfer of uridine 5-monophosphate (from uridine 5-triphosphate), a reaction catalyzed by the N-terminal domain. The polypeptide is Bifunctional protein GlmU (Blochmanniella pennsylvanica (strain BPEN)).